We begin with the raw amino-acid sequence, 278 residues long: Formamidopyrimidine-DNA glycosylase (278 aa).

The Schiff-base intermediate with DNA role is filled by proline 2. Glutamate 3 acts as the Proton donor in catalysis. Lysine 60 serves as the catalytic Proton donor; for beta-elimination activity. DNA-binding residues include histidine 95 and arginine 114. The segment at 244–278 (WVYRRGGEPCRRCGTIIRRDKLSGRSTHWCPTCQG) adopts an FPG-type zinc-finger fold. The active-site Proton donor; for delta-elimination activity is the arginine 268.

Belongs to the FPG family. Monomer. Zn(2+) serves as cofactor.

It carries out the reaction Hydrolysis of DNA containing ring-opened 7-methylguanine residues, releasing 2,6-diamino-4-hydroxy-5-(N-methyl)formamidopyrimidine.. The enzyme catalyses 2'-deoxyribonucleotide-(2'-deoxyribose 5'-phosphate)-2'-deoxyribonucleotide-DNA = a 3'-end 2'-deoxyribonucleotide-(2,3-dehydro-2,3-deoxyribose 5'-phosphate)-DNA + a 5'-end 5'-phospho-2'-deoxyribonucleoside-DNA + H(+). In terms of biological role, involved in base excision repair of DNA damaged by oxidation or by mutagenic agents. Acts as a DNA glycosylase that recognizes and removes damaged bases. Has a preference for oxidized purines, such as 7,8-dihydro-8-oxoguanine (8-oxoG). Has AP (apurinic/apyrimidinic) lyase activity and introduces nicks in the DNA strand. Cleaves the DNA backbone by beta-delta elimination to generate a single-strand break at the site of the removed base with both 3'- and 5'-phosphates. In Parasynechococcus marenigrum (strain WH8102), this protein is Formamidopyrimidine-DNA glycosylase.